The sequence spans 114 residues: Iron-sulfur cluster insertion protein ErpA (114 aa).

Positions 42, 106, and 108 each coordinate iron-sulfur cluster.

Belongs to the HesB/IscA family. In terms of assembly, homodimer. Iron-sulfur cluster serves as cofactor.

Functionally, required for insertion of 4Fe-4S clusters for at least IspG. The chain is Iron-sulfur cluster insertion protein ErpA from Klebsiella pneumoniae (strain 342).